The following is a 345-amino-acid chain: Ferrochelatase (345 aa).

2 residues coordinate Fe cation: His215 and Glu296.

The protein belongs to the ferrochelatase family.

It is found in the cytoplasm. The enzyme catalyses heme b + 2 H(+) = protoporphyrin IX + Fe(2+). It functions in the pathway porphyrin-containing compound metabolism; protoheme biosynthesis; protoheme from protoporphyrin-IX: step 1/1. Its function is as follows. Catalyzes the ferrous insertion into protoporphyrin IX. Essential for normal nodule development. In Bradyrhizobium diazoefficiens (strain JCM 10833 / BCRC 13528 / IAM 13628 / NBRC 14792 / USDA 110), this protein is Ferrochelatase.